Here is a 390-residue protein sequence, read N- to C-terminus: Chorismate synthase 2 (390 aa).

The NADP(+) site is built by Arg-39 and Arg-45. Residues 132-134, 253-254, Gly-298, 313-317, and Arg-339 contribute to the FMN site; these read RSS, NA, and KPIPT.

Belongs to the chorismate synthase family. Homotetramer. FMNH2 is required as a cofactor.

It carries out the reaction 5-O-(1-carboxyvinyl)-3-phosphoshikimate = chorismate + phosphate. It participates in metabolic intermediate biosynthesis; chorismate biosynthesis; chorismate from D-erythrose 4-phosphate and phosphoenolpyruvate: step 7/7. Catalyzes the anti-1,4-elimination of the C-3 phosphate and the C-6 proR hydrogen from 5-enolpyruvylshikimate-3-phosphate (EPSP) to yield chorismate, which is the branch point compound that serves as the starting substrate for the three terminal pathways of aromatic amino acid biosynthesis. This reaction introduces a second double bond into the aromatic ring system. The polypeptide is Chorismate synthase 2 (Bacillus thuringiensis subsp. konkukian (strain 97-27)).